Here is a 165-residue protein sequence, read N- to C-terminus: Interferon gamma (165 aa).

The N-terminal stretch at methionine 1–cysteine 23 is a signal peptide. Glutamine 24 carries the pyrrolidone carboxylic acid modification. 2 N-linked (GlcNAc...) asparagine glycosylation sites follow: asparagine 48 and asparagine 120.

The protein belongs to the type II (or gamma) interferon family. Homodimer. Interacts with IFNGR1 (via extracellular domain); this interaction promotes IFNGR1 dimerization.

The protein resides in the secreted. In terms of biological role, type II interferon produced by immune cells such as T-cells and NK cells that plays crucial roles in antimicrobial, antiviral, and antitumor responses by activating effector immune cells and enhancing antigen presentation. Primarily signals through the JAK-STAT pathway after interaction with its receptor IFNGR1 to affect gene regulation. Upon IFNG binding, IFNGR1 intracellular domain opens out to allow association of downstream signaling components JAK2, JAK1 and STAT1, leading to STAT1 activation, nuclear translocation and transcription of IFNG-regulated genes. Many of the induced genes are transcription factors such as IRF1 that are able to further drive regulation of a next wave of transcription. Plays a role in class I antigen presentation pathway by inducing a replacement of catalytic proteasome subunits with immunoproteasome subunits. In turn, increases the quantity, quality, and repertoire of peptides for class I MHC loading. Increases the efficiency of peptide generation also by inducing the expression of activator PA28 that associates with the proteasome and alters its proteolytic cleavage preference. Up-regulates as well MHC II complexes on the cell surface by promoting expression of several key molecules such as cathepsins B/CTSB, H/CTSH, and L/CTSL. Participates in the regulation of hematopoietic stem cells during development and under homeostatic conditions by affecting their development, quiescence, and differentiation. This is Interferon gamma (IFNG) from Papio anubis (Olive baboon).